A 445-amino-acid chain; its full sequence is Tyrosine--tRNA ligase, mitochondrial (445 aa).

Y33 is an L-tyrosine binding site. D37 is an ATP binding site. The short motif at 38-47 (PTAASLHVGN) is the 'HIGH' region element. 5 residues coordinate L-tyrosine: D77, Y184, Q188, D191, and Q210. A 'KMSKS' region motif is present at residues 245 to 249 (KLGKS). Position 248 (K248) interacts with ATP. The S4 RNA-binding domain occupies 384-445 (QPFSRLLRTL…GKRTFVLDSL (62 aa)).

The protein belongs to the class-I aminoacyl-tRNA synthetase family. Homodimer.

Its subcellular location is the mitochondrion matrix. It catalyses the reaction tRNA(Tyr) + L-tyrosine + ATP = L-tyrosyl-tRNA(Tyr) + AMP + diphosphate + H(+). In terms of biological role, catalyzes the attachment of tyrosine to tRNA(Tyr) in a two-step reaction: tyrosine is first activated by ATP to form Tyr-AMP and then transferred to the acceptor end of tRNA(Tyr). This is Tyrosine--tRNA ligase, mitochondrial from Schizosaccharomyces pombe (strain 972 / ATCC 24843) (Fission yeast).